The chain runs to 465 residues: Ubiquitin carboxyl-terminal hydrolase UCH54 (465 aa).

One can recognise a UCH catalytic domain in the interval 11 to 333 (EWCLIESNPC…VRFNIIAVMK (323 aa)). Cys145 functions as the Nucleophile in the catalytic mechanism. His220 acts as the Proton donor in catalysis. The disordered stretch occupies residues 244–293 (INADEQNKPNPNNNNNNKDNDNDNNNNNNNNNNNNNNNNNNNNNNNNNNI). Low complexity predominate over residues 251 to 292 (KPNPNNNNNNKDNDNDNNNNNNNNNNNNNNNNNNNNNNNNNN). The ULD domain maps to 432 to 460 (NFYPFIMSSLNLMAKHKLLKDAYQKEKLK).

It belongs to the peptidase C12 family.

The enzyme catalyses Thiol-dependent hydrolysis of ester, thioester, amide, peptide and isopeptide bonds formed by the C-terminal Gly of ubiquitin (a 76-residue protein attached to proteins as an intracellular targeting signal).. Functionally, thiol protease that recognizes and hydrolyzes a peptide bond at the C-terminal glycine of either ubiquitin or NEDD8. The polypeptide is Ubiquitin carboxyl-terminal hydrolase UCH54 (Plasmodium falciparum (isolate 3D7)).